A 460-amino-acid polypeptide reads, in one-letter code: Bifunctional protein GlmU (460 aa).

The pyrophosphorylase stretch occupies residues 1–232; that stretch reads MALNVVILAA…AIEVEGANNR (232 aa). UDP-N-acetyl-alpha-D-glucosamine-binding positions include 8–11, K22, Q73, 78–79, 100–102, G137, E157, N172, and N230; these read LAAG, GT, and YGD. Residue D102 participates in Mg(2+) binding. A Mg(2+)-binding site is contributed by N230. Residues 233 to 253 form a linker region; the sequence is VQLAQLERAYQAREAEKLMLA. Residues 254-460 are N-acetyltransferase; it reads GANLRDPSRI…GWQRPVKIKK (207 aa). UDP-N-acetyl-alpha-D-glucosamine contacts are provided by R336 and K354. H366 acts as the Proton acceptor in catalysis. UDP-N-acetyl-alpha-D-glucosamine is bound by residues Y369 and N380. Residues A383, 389-390, S408, A426, and R443 each bind acetyl-CoA; that span reads NY.

It in the N-terminal section; belongs to the N-acetylglucosamine-1-phosphate uridyltransferase family. The protein in the C-terminal section; belongs to the transferase hexapeptide repeat family. In terms of assembly, homotrimer. It depends on Mg(2+) as a cofactor.

Its subcellular location is the cytoplasm. It catalyses the reaction alpha-D-glucosamine 1-phosphate + acetyl-CoA = N-acetyl-alpha-D-glucosamine 1-phosphate + CoA + H(+). The enzyme catalyses N-acetyl-alpha-D-glucosamine 1-phosphate + UTP + H(+) = UDP-N-acetyl-alpha-D-glucosamine + diphosphate. It participates in nucleotide-sugar biosynthesis; UDP-N-acetyl-alpha-D-glucosamine biosynthesis; N-acetyl-alpha-D-glucosamine 1-phosphate from alpha-D-glucosamine 6-phosphate (route II): step 2/2. It functions in the pathway nucleotide-sugar biosynthesis; UDP-N-acetyl-alpha-D-glucosamine biosynthesis; UDP-N-acetyl-alpha-D-glucosamine from N-acetyl-alpha-D-glucosamine 1-phosphate: step 1/1. The protein operates within bacterial outer membrane biogenesis; LPS lipid A biosynthesis. Functionally, catalyzes the last two sequential reactions in the de novo biosynthetic pathway for UDP-N-acetylglucosamine (UDP-GlcNAc). The C-terminal domain catalyzes the transfer of acetyl group from acetyl coenzyme A to glucosamine-1-phosphate (GlcN-1-P) to produce N-acetylglucosamine-1-phosphate (GlcNAc-1-P), which is converted into UDP-GlcNAc by the transfer of uridine 5-monophosphate (from uridine 5-triphosphate), a reaction catalyzed by the N-terminal domain. The sequence is that of Bifunctional protein GlmU from Shewanella baltica (strain OS223).